We begin with the raw amino-acid sequence, 266 residues long: Undecaprenyl-diphosphatase (266 aa).

8 helical membrane-spanning segments follow: residues 1-21 (MDTF…FLPI), 39-59 (QGLS…VMYF), 87-107 (WWII…KGFI), 111-131 (FRSI…LWWA), 144-164 (VGWK…IPGT), 183-203 (AAAR…AILV), 218-238 (ALGL…HYFL), and 246-266 (MTPF…FIFL).

The protein belongs to the UppP family.

It is found in the cell inner membrane. The enzyme catalyses di-trans,octa-cis-undecaprenyl diphosphate + H2O = di-trans,octa-cis-undecaprenyl phosphate + phosphate + H(+). Functionally, catalyzes the dephosphorylation of undecaprenyl diphosphate (UPP). Confers resistance to bacitracin. In Shewanella halifaxensis (strain HAW-EB4), this protein is Undecaprenyl-diphosphatase.